A 265-amino-acid polypeptide reads, in one-letter code: Thiazole synthase (265 aa).

Residue Lys-103 is the Schiff-base intermediate with DXP of the active site. 1-deoxy-D-xylulose 5-phosphate contacts are provided by residues Gly-164, 190–191 (AG), and 212–213 (NT).

The protein belongs to the ThiG family. As to quaternary structure, homotetramer. Forms heterodimers with either ThiH or ThiS.

The protein localises to the cytoplasm. The enzyme catalyses [ThiS sulfur-carrier protein]-C-terminal-Gly-aminoethanethioate + 2-iminoacetate + 1-deoxy-D-xylulose 5-phosphate = [ThiS sulfur-carrier protein]-C-terminal Gly-Gly + 2-[(2R,5Z)-2-carboxy-4-methylthiazol-5(2H)-ylidene]ethyl phosphate + 2 H2O + H(+). The protein operates within cofactor biosynthesis; thiamine diphosphate biosynthesis. Functionally, catalyzes the rearrangement of 1-deoxy-D-xylulose 5-phosphate (DXP) to produce the thiazole phosphate moiety of thiamine. Sulfur is provided by the thiocarboxylate moiety of the carrier protein ThiS. In vitro, sulfur can be provided by H(2)S. This Bordetella pertussis (strain Tohama I / ATCC BAA-589 / NCTC 13251) protein is Thiazole synthase.